Here is a 227-residue protein sequence, read N- to C-terminus: Cytochrome c oxidase subunit 2 (227 aa).

M1 carries the post-translational modification N-formylmethionine. At 1-14 the chain is on the mitochondrial intermembrane side; it reads MAYPMQLGFQDATS. The chain crosses the membrane as a helical span at residues 15-45; the sequence is PIMEELLHFHDHTLMIVFLISSLVLYIISLM. The Mitochondrial matrix segment spans residues 46-59; the sequence is LTTKLTHTSTMDAQ. Residues 60-87 form a helical membrane-spanning segment; sequence EVETIWTILPAIILILIALPSLRILYMM. Residues 88-227 are Mitochondrial intermembrane-facing; the sequence is DEINNPSLTV…YFEKWSASML (140 aa). Residues H161, C196, E198, C200, H204, and M207 each coordinate Cu cation. E198 contributes to the Mg(2+) binding site. Y218 is subject to Phosphotyrosine.

It belongs to the cytochrome c oxidase subunit 2 family. Component of the cytochrome c oxidase (complex IV, CIV), a multisubunit enzyme composed of 14 subunits. The complex is composed of a catalytic core of 3 subunits MT-CO1, MT-CO2 and MT-CO3, encoded in the mitochondrial DNA, and 11 supernumerary subunits COX4I, COX5A, COX5B, COX6A, COX6B, COX6C, COX7A, COX7B, COX7C, COX8 and NDUFA4, which are encoded in the nuclear genome. The complex exists as a monomer or a dimer and forms supercomplexes (SCs) in the inner mitochondrial membrane with NADH-ubiquinone oxidoreductase (complex I, CI) and ubiquinol-cytochrome c oxidoreductase (cytochrome b-c1 complex, complex III, CIII), resulting in different assemblies (supercomplex SCI(1)III(2)IV(1) and megacomplex MCI(2)III(2)IV(2)). Found in a complex with TMEM177, COA6, COX18, COX20, SCO1 and SCO2. Interacts with TMEM177 in a COX20-dependent manner. Interacts with COX20. Interacts with COX16. Requires Cu cation as cofactor.

It is found in the mitochondrion inner membrane. The enzyme catalyses 4 Fe(II)-[cytochrome c] + O2 + 8 H(+)(in) = 4 Fe(III)-[cytochrome c] + 2 H2O + 4 H(+)(out). Component of the cytochrome c oxidase, the last enzyme in the mitochondrial electron transport chain which drives oxidative phosphorylation. The respiratory chain contains 3 multisubunit complexes succinate dehydrogenase (complex II, CII), ubiquinol-cytochrome c oxidoreductase (cytochrome b-c1 complex, complex III, CIII) and cytochrome c oxidase (complex IV, CIV), that cooperate to transfer electrons derived from NADH and succinate to molecular oxygen, creating an electrochemical gradient over the inner membrane that drives transmembrane transport and the ATP synthase. Cytochrome c oxidase is the component of the respiratory chain that catalyzes the reduction of oxygen to water. Electrons originating from reduced cytochrome c in the intermembrane space (IMS) are transferred via the dinuclear copper A center (CU(A)) of subunit 2 and heme A of subunit 1 to the active site in subunit 1, a binuclear center (BNC) formed by heme A3 and copper B (CU(B)). The BNC reduces molecular oxygen to 2 water molecules using 4 electrons from cytochrome c in the IMS and 4 protons from the mitochondrial matrix. The chain is Cytochrome c oxidase subunit 2 (MT-CO2) from Bos indicus (Zebu).